The chain runs to 185 residues: Elongation factor P (185 aa).

This sequence belongs to the elongation factor P family.

The protein localises to the cytoplasm. The protein operates within protein biosynthesis; polypeptide chain elongation. Involved in peptide bond synthesis. Stimulates efficient translation and peptide-bond synthesis on native or reconstituted 70S ribosomes in vitro. Probably functions indirectly by altering the affinity of the ribosome for aminoacyl-tRNA, thus increasing their reactivity as acceptors for peptidyl transferase. This chain is Elongation factor P, found in Bacillus cereus (strain B4264).